The following is a 528-amino-acid chain: Beta-hexosaminidase subunit alpha (528 aa).

The first 22 residues, 1-22 (MAGCRLWVSLLLAAALACLATA), serve as a signal peptide directing secretion. A propeptide spanning residues 23-88 (LWPWPQYIQT…PRPSFSNKQQ (66 aa)) is cleaved from the precursor. A disulfide bridge connects residues Cys-58 and Cys-104. N-linked (GlcNAc...) asparagine glycosylation is found at Asn-115, Asn-157, and Asn-295. A disulfide bridge connects residues Cys-277 and Cys-328. Catalysis depends on Glu-323, which acts as the Proton donor. The tract at residues 422 to 423 (NR) is critical for hydrolysis GM2 gangliosides. Asn-487 carries N-linked (GlcNAc...) asparagine glycosylation. Cys-504 and Cys-521 are oxidised to a cystine.

The protein belongs to the glycosyl hydrolase 20 family. As to quaternary structure, there are 3 beta-hexosaminidase isozymes: isozyme A (hexosaminidase A) is a heterodimer composed of one subunit alpha and one subunit beta (chain A and B); isozyme B (hexosaminidase B) is a homodimer of two beta subunits (two chains A and B); isozyme S (hexosaminidase S) is a homodimer of two alpha subunits. The composition of the dimer (isozyme A versus isozyme S) has a significant effect on the substrate specificity of the alpha subunit active site. Ubiquitous. Most abundant in testis, adrenal, epididymis and heart. Low levels seen in the liver.

Its subcellular location is the lysosome. It catalyses the reaction Hydrolysis of terminal non-reducing N-acetyl-D-hexosamine residues in N-acetyl-beta-D-hexosaminides.. It carries out the reaction N-acetyl-beta-D-galactosaminyl-(1-&gt;4)-beta-D-3-sulfogalactosyl-(1-&gt;4)-beta-D-glucosyl-(1&lt;-&gt;1')-ceramide + H2O = a beta-D-3-sulfogalactosyl-(1-&gt;4)-beta-D-glucosyl-(1&lt;-&gt;1')-ceramide + N-acetyl-beta-D-galactosamine. The catalysed reaction is a ganglioside GM2 (d18:1(4E)) + H2O = a ganglioside GM3 (d18:1(4E)) + N-acetyl-beta-D-galactosamine. The enzyme catalyses a ganglioside GM2 + H2O = a ganglioside GM3 + N-acetyl-beta-D-galactosamine. It catalyses the reaction beta-D-GalNAc-(1-&gt;4)-alpha-L-IdoA-(1-&gt;3)-beta-D-GalNAc-4-sulfate-(1-&gt;4)-alpha-L-IdoA-(1-&gt;3)-D-GalNAc-4-sulfate + H2O = alpha-L-IdoA-(1-&gt;3)-beta-D-GalNAc-4-sulfate-(1-&gt;4)-alpha-L-IdoA-(1-&gt;3)-D-GalNAc-4-sulfate + N-acetyl-D-galactosamine. It carries out the reaction N-acetyl-beta-D-6-sulfogalactosaminyl-(1-&gt;4)-alpha-L-iduronyl-(1-&gt;3)-N-acetyl-D-6-sulfogalactosamine + H2O = alpha-L-iduronyl-(1-&gt;3)-N-acetyl-D-6-sulfogalactosamine + N-acetyl-D-6-sulfogalactosamine. With respect to regulation, addition of GM2A stimulates the hydrolysis of sulfated glycosphingolipid SM2 and the ganglioside GM2. In terms of biological role, hydrolyzes the non-reducing end N-acetyl-D-hexosamine and/or sulfated N-acetyl-D-hexosamine of glycoconjugates, such as the oligosaccharide moieties from proteins and neutral glycolipids, or from certain mucopolysaccharides. The isozyme S is as active as the isozyme A on the anionic bis-sulfated glycans, the chondroitin-6-sulfate trisaccharide (C6S-3), and the dermatan sulfate pentasaccharide, and the sulfated glycosphingolipid SM2. The isozyme B does not hydrolyze each of these substrates, however hydrolyzes efficiently neutral oligosaccharide. Only the isozyme A is responsible for the degradation of GM2 gangliosides in the presence of GM2A. This is Beta-hexosaminidase subunit alpha from Mus musculus (Mouse).